The sequence spans 208 residues: Cytochrome c oxidase assembly protein CtaG (208 aa).

The Cytoplasmic portion of the chain corresponds to 1–19 (MPDTQPNVSPNPIRRRGLG). A helical; Signal-anchor for type II membrane protein membrane pass occupies residues 20–42 (RDATVASICGLVVALMVGASFAA). The Periplasmic portion of the chain corresponds to 43–208 (VPFYNWFCRT…TAPDKRKGNL (166 aa)).

It belongs to the COX11/CtaG family.

The protein localises to the cell inner membrane. Exerts its effect at some terminal stage of cytochrome c oxidase synthesis, probably by being involved in the insertion of the copper B into subunit I. The polypeptide is Cytochrome c oxidase assembly protein CtaG (Rhodopseudomonas palustris (strain HaA2)).